We begin with the raw amino-acid sequence, 256 residues long: MNNIWWQTKGQGNVHLVLLHGWGLNAEVWRCIDEELSSHFTLHLVDLPGFGRSRGFGAMSLADMAEAVLRQAPDKAIWLGWSLGGLVASQIALTHPERVQALVTVASSPCFSARDEWLGIKPDVLAGFQQQLSDDFQRTVERFLALQTMGTETARQDARALKKTVLALPMPEVDVLNGGLEILKTVDLRQPLQNVSMPFLRLYGYLDGLVPRKVVPMLDKLWPHSESYIFAKAAHAPFISHPVEFRHVLVALKQRV.

Residues 15 to 242 (HLVLLHGWGL…AAHAPFISHP (228 aa)) enclose the AB hydrolase-1 domain. Residues tryptophan 22, 82 to 83 (SL), and 143 to 147 (FLALQ) contribute to the substrate site. Serine 82 acts as the Nucleophile in catalysis. Active-site residues include aspartate 207 and histidine 235. Histidine 235 is a binding site for substrate.

The protein belongs to the AB hydrolase superfamily. Carboxylesterase BioH family. In terms of assembly, monomer.

Its subcellular location is the cytoplasm. It carries out the reaction 6-carboxyhexanoyl-[ACP] methyl ester + H2O = 6-carboxyhexanoyl-[ACP] + methanol + H(+). It participates in cofactor biosynthesis; biotin biosynthesis. The physiological role of BioH is to remove the methyl group introduced by BioC when the pimeloyl moiety is complete. It allows to synthesize pimeloyl-ACP via the fatty acid synthetic pathway through the hydrolysis of the ester bonds of pimeloyl-ACP esters. The polypeptide is Pimeloyl-[acyl-carrier protein] methyl ester esterase (Shigella dysenteriae serotype 1 (strain Sd197)).